Reading from the N-terminus, the 309-residue chain is MNRLQVVLPGLNLKNPIIPASGCFGFGEEFAKLYDLSVLGGIMIKAATGEERYGNPTPRVAESGMGMLNAIGLQNPGVEGIIAQKLPFLRQFDTEIIANVAGSTPEEYEDVTRRISRDPVVKAIELNISCPNVKSGGLQFGTDPQMAAELTRRVKAVSEKPVYVKLSPNVTSIVEMAQAVEQAGADGLTMINTLVGMRIDVRTGQPILANRIGGLSGPAIKPVAVRMIHDVAQVVTIPIIGMGGVMEVDDVLEMIYAGASAVAIGTANFVNPFICQELITDLPKRMDELGIEHIMDIRGKAYGATLHRA.

FMN-binding positions include S21 and 45–46; that span reads KA. Residues K45 and 69-73 contribute to the substrate site; that span reads NAIGL. Positions 99 and 127 each coordinate FMN. N127 provides a ligand contact to substrate. The active-site Nucleophile is the C130. FMN contacts are provided by K165 and I191. 192–193 is a binding site for substrate; the sequence is NT. FMN is bound by residues G217, 243–244, and 265–266; these read GG and GT.

It belongs to the dihydroorotate dehydrogenase family. Type 1 subfamily. As to quaternary structure, heterotetramer of 2 PyrK and 2 PyrD type B subunits. It depends on FMN as a cofactor.

The protein resides in the cytoplasm. It catalyses the reaction (S)-dihydroorotate + NAD(+) = orotate + NADH + H(+). It participates in pyrimidine metabolism; UMP biosynthesis via de novo pathway; orotate from (S)-dihydroorotate (NAD(+) route): step 1/1. Catalyzes the conversion of dihydroorotate to orotate with NAD(+) as electron acceptor. The polypeptide is Dihydroorotate dehydrogenase B (NAD(+)), catalytic subunit (pyrD) (Exiguobacterium sibiricum (strain DSM 17290 / CCUG 55495 / CIP 109462 / JCM 13490 / 255-15)).